Consider the following 90-residue polypeptide: Putative toxin RelE1 (90 aa).

This sequence belongs to the RelE toxin family.

In terms of biological role, toxic component of a type II toxin-antitoxin (TA) system. Its cognate antitoxin is RelB1 (Potential). The polypeptide is Putative toxin RelE1 (relE1) (Methanocaldococcus jannaschii (strain ATCC 43067 / DSM 2661 / JAL-1 / JCM 10045 / NBRC 100440) (Methanococcus jannaschii)).